The following is a 913-amino-acid chain: Zinc finger protein 112 (913 aa).

Residues 8–79 (VTFKDVAVVF…ETETPRDGCS (72 aa)) form the KRAB domain. Residue Lys-256 forms a Glycyl lysine isopeptide (Lys-Gly) (interchain with G-Cter in SUMO2) linkage. Residues 258 to 280 (YPCTGYRKAFSNDSSSEVHQQFH) form a C2H2-type 1; degenerate zinc finger. Residues 443 to 465 (YNSEECGNGFSLASHFQDLQIVH) form a C2H2-type 2; degenerate zinc finger. Residues 471–493 (YKRYVCSNSFSHNLYLQGHPKIH) form a C2H2-type 3; degenerate zinc finger. A C2H2-type 4; degenerate zinc finger spans residues 497 to 519 (KPRKEHGNGFNWSSKLKDHQRVH). 13 C2H2-type zinc fingers span residues 525–547 (YKCN…QRVH), 553–575 (YKCE…QRVH), 581–603 (YKCE…QRVH), 609–631 (YKCE…QRVH), 637–659 (FKCE…QRVH), 665–687 (YKCE…QRVH), 693–715 (YQCD…QSVH), 721–743 (YICE…QRVH), 749–771 (YKCE…RRVH), 777–799 (YKCE…QRVH), 805–827 (YKCE…HRVH), 833–855 (YKCE…QRVH), and 861–883 (YKCD…QRVH). Lys-890 participates in a covalent cross-link: Glycyl lysine isopeptide (Lys-Gly) (interchain with G-Cter in SUMO2).

This sequence belongs to the krueppel C2H2-type zinc-finger protein family.

It is found in the nucleus. Its function is as follows. May be involved in transcriptional regulation. The protein is Zinc finger protein 112 (ZNF112) of Homo sapiens (Human).